The following is a 205-amino-acid chain: Small ribosomal subunit protein uS4 (205 aa).

Residues 1 to 46 (MSKRASSKYKIDRRMGENIWGRPKSPVNRREYGPGQHGQRRKGKLS) form a disordered region. The S4 RNA-binding domain maps to 94–154 (SRLDAIVYRA…QKSKQLAIVL (61 aa)).

This sequence belongs to the universal ribosomal protein uS4 family. In terms of assembly, part of the 30S ribosomal subunit. Contacts protein S5. The interaction surface between S4 and S5 is involved in control of translational fidelity.

Its function is as follows. One of the primary rRNA binding proteins, it binds directly to 16S rRNA where it nucleates assembly of the body of the 30S subunit. With S5 and S12 plays an important role in translational accuracy. This chain is Small ribosomal subunit protein uS4, found in Allorhizobium ampelinum (strain ATCC BAA-846 / DSM 112012 / S4) (Agrobacterium vitis (strain S4)).